A 920-amino-acid polypeptide reads, in one-letter code: GTPase activating protein homolog 1 (920 aa).

Positions 65–87 (NLGGLSNDSTNNNSNSNNTIDSS) are enriched in low complexity. The interval 65–91 (NLGGLSNDSTNNNSNSNNTIDSSKPLS) is disordered. One can recognise an F-BAR domain in the interval 90-344 (LSFENDMSDG…FVDIIDPEVD (255 aa)). Positions 184-276 (LNEAIKDMEK…EDEYKEQINE (93 aa)) form a coiled coil. Residues 403–449 (TNTITSQSGSTIISNGASQPIEIPSPQPISEQQQIPPQQQQQQQQAQ) show a composition bias toward low complexity. Disordered regions lie at residues 403–468 (TNTI…PMGR) and 490–518 (STSSLLTKDGNSTTSSNTSTSNSNQLSKS). The segment covering 450–468 (VPPTSINQSSSPPVNPMGR) has biased composition (polar residues). Residues 490–513 (STSSLLTKDGNSTTSSNTSTSNSN) show a composition bias toward low complexity. In terms of domain architecture, Rho-GAP spans 533–716 (VELEVLIEND…NMIIDSLETK (184 aa)). Residues 727–836 (PIIPDDENSD…VSSNGNNINS (110 aa)) are disordered. A compositionally biased stretch (acidic residues) spans 730-741 (PDDENSDDDDDD). Over residues 757 to 836 (NDINTTNINN…VSSNGNNINS (80 aa)) the composition is skewed to low complexity.

It is found in the cytoplasm. It localises to the contractile vacuole. Its function is as follows. Rho GTPase-activating protein involved in the signal transduction pathway. Regulator of the contractile vacuole network as well as involved in driving vacuole emptying. The polypeptide is GTPase activating protein homolog 1 (mgp1) (Dictyostelium discoideum (Social amoeba)).